Reading from the N-terminus, the 683-residue chain is E3 ubiquitin-protein ligase WAVH1 (683 aa).

The RING-type; atypical zinc-finger motif lies at Cys130–Cys176. The 137-residue stretch at Asp302 to Ile438 folds into the VWFA domain.

As to expression, expressed in root tips and leaf primordia.

It carries out the reaction S-ubiquitinyl-[E2 ubiquitin-conjugating enzyme]-L-cysteine + [acceptor protein]-L-lysine = [E2 ubiquitin-conjugating enzyme]-L-cysteine + N(6)-ubiquitinyl-[acceptor protein]-L-lysine.. In terms of biological role, E3 ubiquitin-protein ligase involved in the regulation of root growth. Acts as a positive regulator of root gravitropism. Possesses E3 protein ligase activity in vitro. The polypeptide is E3 ubiquitin-protein ligase WAVH1 (Arabidopsis thaliana (Mouse-ear cress)).